We begin with the raw amino-acid sequence, 378 residues long: uncharacterized protein (378 aa).

The active-site For GATase activity is C16. The 363-residue stretch at 16-378 (CGLFGVIDRS…ELAKQLSEVE (363 aa)) folds into the Glutamine amidotransferase type-2 domain.

This is an uncharacterized protein from Archaeoglobus fulgidus (strain ATCC 49558 / DSM 4304 / JCM 9628 / NBRC 100126 / VC-16).